Consider the following 338-residue polypeptide: GTPase Obg (338 aa).

One can recognise an Obg domain in the interval 1–159 (MKFLDKAIIH…RILRLELILI (159 aa)). Residues 160–333 (AHVGTLGLPN…IVKKIYDFLK (174 aa)) enclose the OBG-type G domain. GTP is bound by residues 166-173 (GLPNSGKS), 191-195 (FTTLK), 213-216 (DIPG), 283-286 (NKID), and 314-316 (SAI). Positions 173 and 193 each coordinate Mg(2+).

Belongs to the TRAFAC class OBG-HflX-like GTPase superfamily. OBG GTPase family. Monomer. Requires Mg(2+) as cofactor.

The protein resides in the cytoplasm. Its function is as follows. An essential GTPase which binds GTP, GDP and possibly (p)ppGpp with moderate affinity, with high nucleotide exchange rates and a fairly low GTP hydrolysis rate. Plays a role in control of the cell cycle, stress response, ribosome biogenesis and in those bacteria that undergo differentiation, in morphogenesis control. The polypeptide is GTPase Obg (Buchnera aphidicola subsp. Baizongia pistaciae (strain Bp)).